The following is a 307-amino-acid chain: 4-hydroxy-3-methylbut-2-enyl diphosphate reductase (307 aa).

Residue Cys-13 participates in [4Fe-4S] cluster binding. The (2E)-4-hydroxy-3-methylbut-2-enyl diphosphate site is built by His-42 and His-75. 2 residues coordinate dimethylallyl diphosphate: His-42 and His-75. The isopentenyl diphosphate site is built by His-42 and His-75. Cys-97 is a binding site for [4Fe-4S] cluster. His-125 contacts (2E)-4-hydroxy-3-methylbut-2-enyl diphosphate. His-125 provides a ligand contact to dimethylallyl diphosphate. His-125 serves as a coordination point for isopentenyl diphosphate. The active-site Proton donor is the Glu-127. Thr-165 is a binding site for (2E)-4-hydroxy-3-methylbut-2-enyl diphosphate. Position 195 (Cys-195) interacts with [4Fe-4S] cluster. Positions 223, 224, 225, and 267 each coordinate (2E)-4-hydroxy-3-methylbut-2-enyl diphosphate. Residues Ser-223, Ser-224, Asn-225, and Ser-267 each contribute to the dimethylallyl diphosphate site. Residues Ser-223, Ser-224, Asn-225, and Ser-267 each coordinate isopentenyl diphosphate.

Belongs to the IspH family. It depends on [4Fe-4S] cluster as a cofactor.

It carries out the reaction isopentenyl diphosphate + 2 oxidized [2Fe-2S]-[ferredoxin] + H2O = (2E)-4-hydroxy-3-methylbut-2-enyl diphosphate + 2 reduced [2Fe-2S]-[ferredoxin] + 2 H(+). It catalyses the reaction dimethylallyl diphosphate + 2 oxidized [2Fe-2S]-[ferredoxin] + H2O = (2E)-4-hydroxy-3-methylbut-2-enyl diphosphate + 2 reduced [2Fe-2S]-[ferredoxin] + 2 H(+). It participates in isoprenoid biosynthesis; dimethylallyl diphosphate biosynthesis; dimethylallyl diphosphate from (2E)-4-hydroxy-3-methylbutenyl diphosphate: step 1/1. It functions in the pathway isoprenoid biosynthesis; isopentenyl diphosphate biosynthesis via DXP pathway; isopentenyl diphosphate from 1-deoxy-D-xylulose 5-phosphate: step 6/6. Catalyzes the conversion of 1-hydroxy-2-methyl-2-(E)-butenyl 4-diphosphate (HMBPP) into a mixture of isopentenyl diphosphate (IPP) and dimethylallyl diphosphate (DMAPP). Acts in the terminal step of the DOXP/MEP pathway for isoprenoid precursor biosynthesis. The polypeptide is 4-hydroxy-3-methylbut-2-enyl diphosphate reductase (Chlamydia trachomatis serovar L2 (strain ATCC VR-902B / DSM 19102 / 434/Bu)).